We begin with the raw amino-acid sequence, 1388 residues long: DNA-directed RNA polymerase subunit beta' (1388 aa).

Zn(2+)-binding residues include Cys-76, Cys-78, Cys-91, and Cys-94. 3 residues coordinate Mg(2+): Asp-467, Asp-469, and Asp-471. Residues Cys-810, Cys-884, Cys-891, and Cys-894 each contribute to the Zn(2+) site.

It belongs to the RNA polymerase beta' chain family. As to quaternary structure, the RNAP catalytic core consists of 2 alpha, 1 beta, 1 beta' and 1 omega subunit. When a sigma factor is associated with the core the holoenzyme is formed, which can initiate transcription. The cofactor is Mg(2+). Requires Zn(2+) as cofactor.

The enzyme catalyses RNA(n) + a ribonucleoside 5'-triphosphate = RNA(n+1) + diphosphate. In terms of biological role, DNA-dependent RNA polymerase catalyzes the transcription of DNA into RNA using the four ribonucleoside triphosphates as substrates. The sequence is that of DNA-directed RNA polymerase subunit beta' from Lawsonia intracellularis (strain PHE/MN1-00).